We begin with the raw amino-acid sequence, 121 residues long: Large ribosomal subunit protein uL22 (121 aa).

This sequence belongs to the universal ribosomal protein uL22 family. As to quaternary structure, part of the 50S ribosomal subunit.

Functionally, this protein binds specifically to 23S rRNA; its binding is stimulated by other ribosomal proteins, e.g. L4, L17, and L20. It is important during the early stages of 50S assembly. It makes multiple contacts with different domains of the 23S rRNA in the assembled 50S subunit and ribosome. In terms of biological role, the globular domain of the protein is located near the polypeptide exit tunnel on the outside of the subunit, while an extended beta-hairpin is found that lines the wall of the exit tunnel in the center of the 70S ribosome. The sequence is that of Large ribosomal subunit protein uL22 from Synechococcus sp. (strain CC9902).